Reading from the N-terminus, the 352-residue chain is 4-hydroxy-3-methylbut-2-en-1-yl diphosphate synthase (flavodoxin) (352 aa).

Positions 262, 265, 297, and 304 each coordinate [4Fe-4S] cluster.

This sequence belongs to the IspG family. It depends on [4Fe-4S] cluster as a cofactor.

It catalyses the reaction (2E)-4-hydroxy-3-methylbut-2-enyl diphosphate + oxidized [flavodoxin] + H2O + 2 H(+) = 2-C-methyl-D-erythritol 2,4-cyclic diphosphate + reduced [flavodoxin]. Its pathway is isoprenoid biosynthesis; isopentenyl diphosphate biosynthesis via DXP pathway; isopentenyl diphosphate from 1-deoxy-D-xylulose 5-phosphate: step 5/6. Functionally, converts 2C-methyl-D-erythritol 2,4-cyclodiphosphate (ME-2,4cPP) into 1-hydroxy-2-methyl-2-(E)-butenyl 4-diphosphate. The chain is 4-hydroxy-3-methylbut-2-en-1-yl diphosphate synthase (flavodoxin) from Nitratiruptor sp. (strain SB155-2).